We begin with the raw amino-acid sequence, 502 residues long: Hexose transporter 1 (502 aa).

Residues Met-1 to Ser-26 are Cytoplasmic-facing. Residues Leu-27 to Leu-47 form a helical membrane-spanning segment. Topologically, residues Asn-48–Ser-76 are extracellular. The cysteines at positions 61 and 68 are disulfide-linked. The chain crosses the membrane as a helical span at residues Phe-77 to Val-97. Over Gln-98–Arg-102 the chain is Cytoplasmic. The chain crosses the membrane as a helical span at residues Phe-103–His-123. Topologically, residues His-124 to Arg-132 are extracellular. Residues Leu-133–Met-153 traverse the membrane as a helical segment. Topologically, residues Thr-154–Gly-163 are cytoplasmic. The chain crosses the membrane as a helical span at residues Val-164 to Met-184. Gln-167 serves as a coordination point for alpha-D-glucose. Gln-167 is a binding site for beta-D-glucose. Residues Gly-185–Arg-205 are Extracellular-facing. The helical transmembrane segment at Leu-206–Tyr-226 threads the bilayer. The Cytoplasmic portion of the chain corresponds to Lys-227 to Asn-291. A helical membrane pass occupies residues Val-292–Val-312. The alpha-D-glucose site is built by Gln-303, Gln-304, and Asn-309. Gln-303 lines the beta-D-glucose pocket. Asn-309 contributes to the beta-D-glucose binding site. The Extracellular segment spans residues Ser-313–Thr-329. The helical transmembrane segment at Thr-330–Val-350 threads the bilayer. Position 339 (Asn-339) interacts with beta-D-glucose. The Cytoplasmic segment spans residues Glu-351 to Lys-356. The chain crosses the membrane as a helical span at residues Thr-357–Asn-377. The Extracellular portion of the chain corresponds to Gln-378 to Ser-390. Residues Ile-391–Ile-411 form a helical membrane-spanning segment. Position 410 (Trp-410) interacts with alpha-D-glucose. Residues Tyr-412 to Ser-427 are Cytoplasmic-facing. Residues Leu-428–Ile-448 traverse the membrane as a helical segment. At Lys-449–Thr-453 the chain is on the extracellular side. Residues Ile-454 to Ile-474 traverse the membrane as a helical segment. The Cytoplasmic segment spans residues Lys-475 to Val-502.

It belongs to the major facilitator superfamily. Sugar transporter (TC 2.A.1.1) family. As to quaternary structure, homodimer.

Its subcellular location is the cell membrane. It catalyses the reaction D-glucose(out) = D-glucose(in). The catalysed reaction is D-fructose(out) = D-fructose(in). The enzyme catalyses D-galactose(in) = D-galactose(out). It carries out the reaction D-mannose(out) = D-mannose(in). It catalyses the reaction D-glucosamine(out) = D-glucosamine(in). The catalysed reaction is D-xylose(out) = D-xylose(in). Its activity is regulated as follows. Inhibited by compound 3361 (3-O-((undec-10-en)-1-yl)-D-glucose). Functionally, sodium-independent facilitative hexose transporter. Can transport D-glucose and D-fructose. Can transport D-mannose, D-galactose, D-xylose and D-glucosamine. The chain is Hexose transporter 1 from Plasmodium vivax (strain Brazil I).